Consider the following 349-residue polypeptide: Hydroxymethylglutaryl-CoA synthase (349 aa).

(3S)-3-hydroxy-3-methylglutaryl-CoA-binding residues include aspartate 30 and alanine 31. The active-site Proton donor/acceptor is the glutamate 82. (3S)-3-hydroxy-3-methylglutaryl-CoA is bound by residues cysteine 114 and threonine 155. The active-site Acyl-thioester intermediate is cysteine 114. Arginine 203 provides a ligand contact to CoA. (3S)-3-hydroxy-3-methylglutaryl-CoA contacts are provided by threonine 205 and histidine 238. The active-site Proton donor/acceptor is the histidine 238. A CoA-binding site is contributed by lysine 243. 2 residues coordinate (3S)-3-hydroxy-3-methylglutaryl-CoA: asparagine 270 and serine 300.

The protein belongs to the thiolase-like superfamily. Archaeal HMG-CoA synthase family. As to quaternary structure, interacts with acetoacetyl-CoA thiolase that catalyzes the precedent step in the pathway and with a DUF35 protein. The acetoacetyl-CoA thiolase/HMG-CoA synthase complex channels the intermediate via a fused CoA-binding site, which allows for efficient coupling of the endergonic thiolase reaction with the exergonic HMGCS reaction.

The enzyme catalyses acetoacetyl-CoA + acetyl-CoA + H2O = (3S)-3-hydroxy-3-methylglutaryl-CoA + CoA + H(+). Its pathway is metabolic intermediate biosynthesis; (R)-mevalonate biosynthesis; (R)-mevalonate from acetyl-CoA: step 2/3. In terms of biological role, catalyzes the condensation of acetyl-CoA with acetoacetyl-CoA to form 3-hydroxy-3-methylglutaryl-CoA (HMG-CoA). Functions in the mevalonate (MVA) pathway leading to isopentenyl diphosphate (IPP), a key precursor for the biosynthesis of isoprenoid compounds that are building blocks of archaeal membrane lipids. The sequence is that of Hydroxymethylglutaryl-CoA synthase from Methanococcus maripaludis (strain C7 / ATCC BAA-1331).